Reading from the N-terminus, the 642-residue chain is Threonine--tRNA ligase (642 aa).

Positions 1–61 (MPVITLPDGS…ENDATLSIIT (61 aa)) constitute a TGS domain. The interval 243 to 534 (DHRKIGKQLD…LTEEFAGFFP (292 aa)) is catalytic. Residues C334, H385, and H511 each coordinate Zn(2+).

The protein belongs to the class-II aminoacyl-tRNA synthetase family. Homodimer. Zn(2+) serves as cofactor.

It localises to the cytoplasm. It catalyses the reaction tRNA(Thr) + L-threonine + ATP = L-threonyl-tRNA(Thr) + AMP + diphosphate + H(+). Catalyzes the attachment of threonine to tRNA(Thr) in a two-step reaction: L-threonine is first activated by ATP to form Thr-AMP and then transferred to the acceptor end of tRNA(Thr). Also edits incorrectly charged L-seryl-tRNA(Thr). The sequence is that of Threonine--tRNA ligase from Salmonella heidelberg (strain SL476).